A 164-amino-acid chain; its full sequence is 3-isopropylmalate dehydratase small subunit 2 (164 aa).

It belongs to the LeuD family. LeuD type 2 subfamily. Heterodimer of LeuC and LeuD.

The enzyme catalyses (2R,3S)-3-isopropylmalate = (2S)-2-isopropylmalate. The protein operates within amino-acid biosynthesis; L-leucine biosynthesis; L-leucine from 3-methyl-2-oxobutanoate: step 2/4. Catalyzes the isomerization between 2-isopropylmalate and 3-isopropylmalate, via the formation of 2-isopropylmaleate. In Pyrococcus furiosus (strain ATCC 43587 / DSM 3638 / JCM 8422 / Vc1), this protein is 3-isopropylmalate dehydratase small subunit 2 (leuD2).